The following is a 140-amino-acid chain: ATP synthase epsilon chain (140 aa).

This sequence belongs to the ATPase epsilon chain family. As to quaternary structure, F-type ATPases have 2 components, CF(1) - the catalytic core - and CF(0) - the membrane proton channel. CF(1) has five subunits: alpha(3), beta(3), gamma(1), delta(1), epsilon(1). CF(0) has three main subunits: a, b and c.

It localises to the cell inner membrane. In terms of biological role, produces ATP from ADP in the presence of a proton gradient across the membrane. The polypeptide is ATP synthase epsilon chain (Vibrio vulnificus (strain CMCP6)).